A 68-amino-acid chain; its full sequence is Neuronal regeneration-related protein (68 aa).

This is Neuronal regeneration-related protein (NREP) from Gallus gallus (Chicken).